The sequence spans 329 residues: GTPase Obg (329 aa).

The region spanning 1–159 (MQFIDQARIT…WLLHLELKLL (159 aa)) is the Obg domain. The 169-residue stretch at 160-328 (AEVGIIGLPN…LLNKIWSKLE (169 aa)) folds into the OBG-type G domain. Residues 166-173 (GLPNAGKS), 191-195 (FTTLI), 213-216 (DIPG), 280-283 (NKKE), and 309-311 (SAI) contribute to the ATP site. 2 residues coordinate Mg(2+): S173 and T193.

This sequence belongs to the TRAFAC class OBG-HflX-like GTPase superfamily. OBG GTPase family. As to quaternary structure, monomer. The cofactor is Mg(2+).

It localises to the cytoplasm. Its function is as follows. An essential GTPase which binds GTP, GDP and possibly (p)ppGpp with moderate affinity, with high nucleotide exchange rates and a fairly low GTP hydrolysis rate. Plays a role in control of the cell cycle, stress response, ribosome biogenesis and in those bacteria that undergo differentiation, in morphogenesis control. The polypeptide is GTPase Obg (Prochlorococcus marinus (strain SARG / CCMP1375 / SS120)).